We begin with the raw amino-acid sequence, 309 residues long: Foldase protein PrsA 2 (309 aa).

The signal sequence occupies residues 1–22 (MKQMNKLITGVVTLATVVTLSA). Cys23 is lipidated: N-palmitoyl cysteine. Residue Cys23 is the site of S-diacylglycerol cysteine attachment. A PpiC domain is found at 146–241 (TPTMTAEIMQ…RTYHIIKVTK (96 aa)).

It belongs to the PrsA family.

It is found in the cell membrane. The catalysed reaction is [protein]-peptidylproline (omega=180) = [protein]-peptidylproline (omega=0). Its function is as follows. Plays a major role in protein secretion by helping the post-translocational extracellular folding of several secreted proteins. The polypeptide is Foldase protein PrsA 2 (Streptococcus pyogenes serotype M6 (strain ATCC BAA-946 / MGAS10394)).